A 270-amino-acid polypeptide reads, in one-letter code: MSMQTAPIKKITLNHLQAKKNQEKIIAITAYDALFAQIFDPLVDVILVGDSLNMSFFNQNDTLSASVKMMLYHTKAVCAGAKTPFIITDMPFGSYKDEKTALKNAIRVYKETQASAIKLEGGKEKAKLVKTLTNEGVIVVGHIGLMPQFVRLDGGYKIKGKNEEQQKKLLEDALSLEEAGAGLLVLEGITTPIAQTITQKIKIPTIGIGSGKDCDGQILVWSDMLGFFDSFKPKFVREYLKGKELVQNAIKQYADDVKKGNFPNELESYH.

Residues D50 and D89 each coordinate Mg(2+). 3-methyl-2-oxobutanoate contacts are provided by residues 50-51 (DS), D89, and K118. A Mg(2+)-binding site is contributed by E120. Residue E187 is the Proton acceptor of the active site.

The protein belongs to the PanB family. In terms of assembly, homodecamer; pentamer of dimers. The cofactor is Mg(2+).

It localises to the cytoplasm. It catalyses the reaction 3-methyl-2-oxobutanoate + (6R)-5,10-methylene-5,6,7,8-tetrahydrofolate + H2O = 2-dehydropantoate + (6S)-5,6,7,8-tetrahydrofolate. The protein operates within cofactor biosynthesis; (R)-pantothenate biosynthesis; (R)-pantoate from 3-methyl-2-oxobutanoate: step 1/2. Its function is as follows. Catalyzes the reversible reaction in which hydroxymethyl group from 5,10-methylenetetrahydrofolate is transferred onto alpha-ketoisovalerate to form ketopantoate. In Helicobacter pylori (strain HPAG1), this protein is 3-methyl-2-oxobutanoate hydroxymethyltransferase.